A 369-amino-acid chain; its full sequence is Cobalt-precorrin-5B C(1)-methyltransferase (369 aa).

Belongs to the CbiD family.

The catalysed reaction is Co-precorrin-5B + S-adenosyl-L-methionine = Co-precorrin-6A + S-adenosyl-L-homocysteine. The protein operates within cofactor biosynthesis; adenosylcobalamin biosynthesis; cob(II)yrinate a,c-diamide from sirohydrochlorin (anaerobic route): step 6/10. In terms of biological role, catalyzes the methylation of C-1 in cobalt-precorrin-5B to form cobalt-precorrin-6A. This is Cobalt-precorrin-5B C(1)-methyltransferase from Brucella melitensis biotype 1 (strain ATCC 23456 / CCUG 17765 / NCTC 10094 / 16M).